Reading from the N-terminus, the 409-residue chain is Multifunctional CCA protein (409 aa).

2 residues coordinate ATP: G8 and R11. The CTP site is built by G8 and R11. Mg(2+) is bound by residues D21 and D23. Residues R91, R137, and R140 each coordinate ATP. 3 residues coordinate CTP: R91, R137, and R140. In terms of domain architecture, HD spans 228–329; sequence TGVHTLSVLE…LELLQSFDVY (102 aa).

Belongs to the tRNA nucleotidyltransferase/poly(A) polymerase family. Bacterial CCA-adding enzyme type 1 subfamily. Monomer. Can also form homodimers and oligomers. The cofactor is Mg(2+). Requires Ni(2+) as cofactor.

The catalysed reaction is a tRNA precursor + 2 CTP + ATP = a tRNA with a 3' CCA end + 3 diphosphate. It carries out the reaction a tRNA with a 3' CCA end + 2 CTP + ATP = a tRNA with a 3' CCACCA end + 3 diphosphate. Catalyzes the addition and repair of the essential 3'-terminal CCA sequence in tRNAs without using a nucleic acid template. Adds these three nucleotides in the order of C, C, and A to the tRNA nucleotide-73, using CTP and ATP as substrates and producing inorganic pyrophosphate. tRNA 3'-terminal CCA addition is required both for tRNA processing and repair. Also involved in tRNA surveillance by mediating tandem CCA addition to generate a CCACCA at the 3' terminus of unstable tRNAs. While stable tRNAs receive only 3'-terminal CCA, unstable tRNAs are marked with CCACCA and rapidly degraded. The polypeptide is Multifunctional CCA protein (Pseudomonas fluorescens (strain SBW25)).